The chain runs to 232 residues: Ras association domain-containing protein 3 (232 aa).

The residue at position 2 (Ser2) is an N-acetylserine. Residues 25–46 (RAPPGKSRSGQPDVEKEKETHN) are disordered. Positions 37-46 (DVEKEKETHN) are enriched in basic and acidic residues. A Ras-associating domain is found at 78-180 (YTGFIKVQME…TLSFVLREHE (103 aa)). The SARAH domain maps to 181 to 228 (IGEWEAFSLPELQNFLRILDKEEDEQLQSLKRRYTAYRQKLEEALGEV).

The protein resides in the cytoplasm. It localises to the cytoskeleton. In Mus musculus (Mouse), this protein is Ras association domain-containing protein 3 (Rassf3).